The primary structure comprises 255 residues: tRNA (guanine-N(1)-)-methyltransferase (255 aa).

Residues glycine 113 and 133–138 (IGDYVL) contribute to the S-adenosyl-L-methionine site.

This sequence belongs to the RNA methyltransferase TrmD family. In terms of assembly, homodimer.

It is found in the cytoplasm. The catalysed reaction is guanosine(37) in tRNA + S-adenosyl-L-methionine = N(1)-methylguanosine(37) in tRNA + S-adenosyl-L-homocysteine + H(+). Functionally, specifically methylates guanosine-37 in various tRNAs. The polypeptide is tRNA (guanine-N(1)-)-methyltransferase (Escherichia coli O127:H6 (strain E2348/69 / EPEC)).